The primary structure comprises 229 residues: Secretory carrier-associated membrane protein 4 (229 aa).

Over 1–39 (MSEKENNFPPLPKFIPVKPCFYQNFSDEIPVEHQVLVKR) the chain is Cytoplasmic. Helical transmembrane passes span 40–60 (IYRL…ACLA), 61–81 (WWIG…LLLF), 105–125 (FMAF…QAIG), and 149–169 (VVML…AIAI). The Cytoplasmic segment spans residues 170–229 (MKVHRIYRGAGGSFQKAQTEWNTGTWRNPPSREAQYNNFSGNSLPEYPTVPSYPGSGQWP). At T194 the chain carries Phosphothreonine. The segment at 208 to 229 (FSGNSLPEYPTVPSYPGSGQWP) is disordered.

The protein belongs to the SCAMP family.

It is found in the membrane. Probably involved in membrane protein trafficking. The chain is Secretory carrier-associated membrane protein 4 (SCAMP4) from Pongo abelii (Sumatran orangutan).